Reading from the N-terminus, the 557-residue chain is Beta-amylase 2, chloroplastic (557 aa).

The transit peptide at 1–38 (MMSLNLAHQTGAAAAVAPAAPRTAVVAAAAGTVSAPAV) directs the protein to the chloroplast. Residues D135, H175, and D183 each contribute to the substrate site. E267 functions as the Proton donor in the catalytic mechanism. Substrate is bound by residues K380, H385, and T427. E465 functions as the Proton acceptor in the catalytic mechanism. Substrate-binding positions include 466–467 (NA) and R499.

The protein belongs to the glycosyl hydrolase 14 family.

Its subcellular location is the plastid. The protein resides in the chloroplast. It catalyses the reaction Hydrolysis of (1-&gt;4)-alpha-D-glucosidic linkages in polysaccharides so as to remove successive maltose units from the non-reducing ends of the chains.. Possesses beta-amylase activity in vitro. May be involved in cold resistance by mediating the accumulation of maltose upon freezing stress, thus contributing to the protection of membranes. This Oryza sativa subsp. japonica (Rice) protein is Beta-amylase 2, chloroplastic.